The sequence spans 279 residues: uncharacterized protein (279 aa).

Low complexity-rich tracts occupy residues 1-25 (MNEN…NNNN), 86-151 (PSQS…NGNN), and 232-250 (NKNN…DDNN). Disordered stretches follow at residues 1-27 (MNEN…NNIK), 83-153 (NLFP…NNID), and 213-260 (QSVN…KVKS).

This is an uncharacterized protein from Dictyostelium discoideum (Social amoeba).